The sequence spans 650 residues: Protein KINESIN LIGHT CHAIN-RELATED 3 (650 aa).

Residues 104–141 (EKQTGKKNVTKSNVGVGGMRKKKVGGTKLQNGNEEPSS) form a disordered region. Positions 131-141 (KLQNGNEEPSS) are enriched in polar residues. TPR repeat units lie at residues 192–225 (IMCL…PVVE), 235–268 (FAGL…QKKV), 277–310 (GETC…HRES), 319–353 (AADR…AANG), 359–392 (AFVD…LKTA), 401–434 (GSVY…YESH), 444–477 (ASGL…YADS), 485–518 (AGIE…LRAT), 527–560 (GIAL…LEQE), and 569–602 (LGLY…REEK).

Belongs to the kinesin light chain family.

This Arabidopsis thaliana (Mouse-ear cress) protein is Protein KINESIN LIGHT CHAIN-RELATED 3.